The following is a 259-amino-acid chain: Ubiquitin-conjugating enzyme E2 J2 (259 aa).

At 1-226 (MSSNSVKRAP…AGLQQANRHH (226 aa)) the chain is on the cytoplasmic side. The 151-residue stretch at 12-162 (TATQRLKQDY…DKVFCELFPE (151 aa)) folds into the UBC core domain. Residue C94 is the Glycyl thioester intermediate of the active site. The disordered stretch occupies residues 174–200 (QDELSSRPQALPLPDVVPDGETHHGQH). Residues 227-247 (GLLGGALANLFVIVGFAAFAY) form a helical; Anchor for type IV membrane protein membrane-spanning segment. Topologically, residues 248 to 259 (TVKYVLRSIAQE) are lumenal.

The protein belongs to the ubiquitin-conjugating enzyme family.

Its subcellular location is the endoplasmic reticulum membrane. It catalyses the reaction S-ubiquitinyl-[E1 ubiquitin-activating enzyme]-L-cysteine + [E2 ubiquitin-conjugating enzyme]-L-cysteine = [E1 ubiquitin-activating enzyme]-L-cysteine + S-ubiquitinyl-[E2 ubiquitin-conjugating enzyme]-L-cysteine.. Its pathway is protein modification; protein ubiquitination. In terms of biological role, catalyzes the covalent attachment of ubiquitin to other proteins. Seems to function in the selective degradation of misfolded membrane proteins from the endoplasmic reticulum (ERAD). In cooperation with the GATOR2 complex, catalyzes 'Lys-6'-linked ubiquitination of NPRL2. The chain is Ubiquitin-conjugating enzyme E2 J2 (UBE2J2) from Bos taurus (Bovine).